The chain runs to 416 residues: Chromate transport protein (416 aa).

The tract at residues 1–21 (MSVANEESYRPSKATDATTEA) is disordered. Transmembrane regions (helical) follow at residues 99-119 (LGGV…MFAL), 128-148 (FVGT…IALI), 160-177 (LLDR…LAAI), 181-198 (DFWI…LLVL), 204-224 (ALLV…WAAP), 237-257 (ASVL…FGGA), 283-303 (LALS…VGYV), 308-328 (IGAV…SLIF), 341-361 (LHAF…ATTI), 371-391 (VPSL…LYAW), and 395-415 (LNVV…FPNQ).

It belongs to the chromate ion transporter (CHR) (TC 2.A.51) family.

Its subcellular location is the cell inner membrane. This protein reduces chromate accumulation and is essential for chromate resistance. This Pseudomonas aeruginosa protein is Chromate transport protein.